The primary structure comprises 811 residues: Receptor-like protein 52 (811 aa).

Positions 1–22 (MTFLPLLFIFFFLTSIPFPAFS) are cleaved as a signal peptide. Topologically, residues 23 to 770 (QYNDRSTLLN…EDEEEVMNWT (748 aa)) are extracellular. Residues asparagine 47, asparagine 64, asparagine 74, asparagine 93, asparagine 109, and asparagine 124 are each glycosylated (N-linked (GlcNAc...) asparagine). LRR repeat units follow at residues 62–86 (AGNVTEINFQNQNFTGTVPTTICNF), 87–110 (PNLKSLNLSFNYFAGEFPTVLYNC), 112–134 (KLQYLDLSQNLFNGSLPDDINRL), 135–159 (APKLKYLDLAANSFAGDIPKNIGRI), 161–183 (KLKVLNLYMSEYDGTFPSEIGDL), and 184–208 (SELEELQLALNDKFTPVKLPTEFGK). The LRR 7; degenerate repeat unit spans residues 211–233 (KLKYMWLEEMNLIGEISAVVFEN). Residues asparagine 233, asparagine 246, asparagine 260, asparagine 295, and asparagine 304 are each glycosylated (N-linked (GlcNAc...) asparagine). 8 LRR repeats span residues 234-258 (MTDLKHVDLSVNNLTGRIPDVLFGL), 260-281 (NLTELYLFANDLTGEIPKSISA), 282-305 (KNLVHLDLSANNLNGSIPESIGNL), 307-329 (NLELLYLFVNELTGEIPRAIGKL), 330-354 (PELKELKLFTNKLTGEIPAEIGFIS), 356-377 (LERFEVSENQLTGKLPENLCHG), 379-401 (KLQSVIVYSNNLTGEIPESLGDC), and 403-427 (TLSSVLLQNNGFSGSVTISNNTRSN). Asparagine 389, asparagine 422, asparagine 429, asparagine 455, asparagine 464, and asparagine 485 each carry an N-linked (GlcNAc...) asparagine glycan. 10 LRR repeats span residues 441-465 (LHSLILLDLSTNKFNGSIPRCIANL), 466-489 (STLEVLNLGKNHLSGSIPENISTS), 491-511 (KSIDIGHNQLAGKLPRSLVRI), 512-537 (SSLEVLNVESNKINDTFPFWLDSMQQ), 539-557 (QVLVLRSNAFHGSINQNGF), 558-581 (SKLRIIDISGNHFNGTLPLDFFVN), 625-649 (LNTFTTIDFSGNKFEGEIPRSVGLL), 650-673 (KELHVLNLSNNGFTGHIPSSMGNL), 674-697 (IELESLDVSQNKLSGEIPPELGKL), and 699-722 (YLAYMNFSQNQFVGLVPGGTQFQT). Residue asparagine 525 is glycosylated (N-linked (GlcNAc...) asparagine). N-linked (GlcNAc...) asparagine glycans are attached at residues asparagine 571 and asparagine 581. A glycan (N-linked (GlcNAc...) asparagine) is linked at asparagine 656. A glycan (N-linked (GlcNAc...) asparagine) is linked at asparagine 704. The helical transmembrane segment at 771-791 (AAAIGSIPGISIGLTMGYILV) threads the bilayer. Residues 792–811 (SYKPEWLMNSGRNKRRIKPI) lie on the Cytoplasmic side of the membrane.

It belongs to the RLP family.

Its subcellular location is the cell membrane. Required for defense against powdery mildew pathogen. The protein is Receptor-like protein 52 of Arabidopsis thaliana (Mouse-ear cress).